A 307-amino-acid polypeptide reads, in one-letter code: Glycine--tRNA ligase alpha subunit (307 aa).

This sequence belongs to the class-II aminoacyl-tRNA synthetase family. As to quaternary structure, tetramer of two alpha and two beta subunits.

Its subcellular location is the cytoplasm. The enzyme catalyses tRNA(Gly) + glycine + ATP = glycyl-tRNA(Gly) + AMP + diphosphate. This chain is Glycine--tRNA ligase alpha subunit (glyQ), found in Xylella fastidiosa (strain 9a5c).